An 80-amino-acid polypeptide reads, in one-letter code: Small ribosomal subunit protein uS17 (80 aa).

This sequence belongs to the universal ribosomal protein uS17 family. As to quaternary structure, part of the 30S ribosomal subunit.

Its function is as follows. One of the primary rRNA binding proteins, it binds specifically to the 5'-end of 16S ribosomal RNA. The chain is Small ribosomal subunit protein uS17 from Brucella suis (strain ATCC 23445 / NCTC 10510).